A 261-amino-acid polypeptide reads, in one-letter code: Cytochrome c oxidase subunit 3 (261 aa).

The Mitochondrial matrix portion of the chain corresponds to 1-15 (MSHQAHAYHMVDPSP). The chain crosses the membrane as a helical span at residues 16–34 (WPLTGAGAALLMTSGLAMW). At 35-40 (FHKNSC) the chain is on the mitochondrial intermembrane side. Residues 41–66 (ILMTLGLILMLLTMYQWWRDIVREGT) form a helical membrane-spanning segment. The Mitochondrial matrix portion of the chain corresponds to 67–72 (FLGHHT). A helical membrane pass occupies residues 73–105 (SPVQQGLRYGMILFIISEVCFFAGFFWAFYHAS). Residues 106–128 (LAPTPELGLTWPPTGINPLNPFE) are Mitochondrial intermembrane-facing. A helical membrane pass occupies residues 129 to 152 (VPLLNTAVLLASGVSVTWAHHSIT). The Mitochondrial matrix segment spans residues 153 to 155 (EKN). A helical transmembrane segment spans residues 156–183 (RTETTQALTLTVLLGLYFTALQIMEYYE). The Mitochondrial intermembrane segment spans residues 184–190 (TPFTMAD). The helical transmembrane segment at 191–223 (GVYGSTFFVATGFHGLHVIIGSLFLLTCLLRHL) threads the bilayer. At 224-232 (QYHFTSKHH) the chain is on the mitochondrial matrix side. Residues 233-256 (FGFEAAAWYWHFVDVVWLFLYISI) form a helical membrane-spanning segment. Topologically, residues 257–261 (YWWGS) are mitochondrial intermembrane.

It belongs to the cytochrome c oxidase subunit 3 family. In terms of assembly, component of the cytochrome c oxidase (complex IV, CIV), a multisubunit enzyme composed of 14 subunits. The complex is composed of a catalytic core of 3 subunits MT-CO1, MT-CO2 and MT-CO3, encoded in the mitochondrial DNA, and 11 supernumerary subunits COX4I, COX5A, COX5B, COX6A, COX6B, COX6C, COX7A, COX7B, COX7C, COX8 and NDUFA4, which are encoded in the nuclear genome. The complex exists as a monomer or a dimer and forms supercomplexes (SCs) in the inner mitochondrial membrane with NADH-ubiquinone oxidoreductase (complex I, CI) and ubiquinol-cytochrome c oxidoreductase (cytochrome b-c1 complex, complex III, CIII), resulting in different assemblies (supercomplex SCI(1)III(2)IV(1) and megacomplex MCI(2)III(2)IV(2)).

Its subcellular location is the mitochondrion inner membrane. It carries out the reaction 4 Fe(II)-[cytochrome c] + O2 + 8 H(+)(in) = 4 Fe(III)-[cytochrome c] + 2 H2O + 4 H(+)(out). Its function is as follows. Component of the cytochrome c oxidase, the last enzyme in the mitochondrial electron transport chain which drives oxidative phosphorylation. The respiratory chain contains 3 multisubunit complexes succinate dehydrogenase (complex II, CII), ubiquinol-cytochrome c oxidoreductase (cytochrome b-c1 complex, complex III, CIII) and cytochrome c oxidase (complex IV, CIV), that cooperate to transfer electrons derived from NADH and succinate to molecular oxygen, creating an electrochemical gradient over the inner membrane that drives transmembrane transport and the ATP synthase. Cytochrome c oxidase is the component of the respiratory chain that catalyzes the reduction of oxygen to water. Electrons originating from reduced cytochrome c in the intermembrane space (IMS) are transferred via the dinuclear copper A center (CU(A)) of subunit 2 and heme A of subunit 1 to the active site in subunit 1, a binuclear center (BNC) formed by heme A3 and copper B (CU(B)). The BNC reduces molecular oxygen to 2 water molecules using 4 electrons from cytochrome c in the IMS and 4 protons from the mitochondrial matrix. This chain is Cytochrome c oxidase subunit 3 (MT-CO3), found in Petromyzon marinus (Sea lamprey).